The primary structure comprises 418 residues: Ig-like V-type domain-containing protein FAM187A (418 aa).

An N-terminal signal peptide occupies residues M1–A18. Topologically, residues F19–T376 are extracellular. Residues P267 to S361 form the Ig-like V-type domain. C289 and C345 form a disulfide bridge. The N-linked (GlcNAc...) asparagine glycan is linked to N317. The helical transmembrane segment at A377–L397 threads the bilayer. Residues C398 to L418 lie on the Cytoplasmic side of the membrane.

It belongs to the FAM187 family.

It localises to the membrane. This is Ig-like V-type domain-containing protein FAM187A (Fam187a) from Rattus norvegicus (Rat).